The primary structure comprises 141 residues: Large ribosomal subunit protein uL11 (141 aa).

The protein belongs to the universal ribosomal protein uL11 family. Part of the ribosomal stalk of the 50S ribosomal subunit. Interacts with L10 and the large rRNA to form the base of the stalk. L10 forms an elongated spine to which L12 dimers bind in a sequential fashion forming a multimeric L10(L12)X complex. Post-translationally, one or more lysine residues are methylated.

Forms part of the ribosomal stalk which helps the ribosome interact with GTP-bound translation factors. This is Large ribosomal subunit protein uL11 from Exiguobacterium sibiricum (strain DSM 17290 / CCUG 55495 / CIP 109462 / JCM 13490 / 255-15).